A 20-amino-acid polypeptide reads, in one-letter code: Short cationic peptide-6a (20 aa).

Serine 20 carries the serine amide modification.

As to expression, expressed by the venom gland.

The protein resides in the secreted. The chain is Short cationic peptide-6a from Cupiennius salei (American wandering spider).